A 461-amino-acid chain; its full sequence is GTPase Der (461 aa).

EngA-type G domains lie at 2–164 (QKII…EDDV) and 197–368 (IRVG…KNFT). Residues 8 to 15 (GKPNVGKS), 55 to 59 (DSGGL), 116 to 119 (NKID), 203 to 210 (GRVNVGKS), 250 to 254 (DTAGI), and 314 to 317 (NKWD) contribute to the GTP site. A KH-like domain is found at 369-453 (QKIQTSKLNE…PIVLAPKKRG (85 aa)).

The protein belongs to the TRAFAC class TrmE-Era-EngA-EngB-Septin-like GTPase superfamily. EngA (Der) GTPase family. As to quaternary structure, associates with the 50S ribosomal subunit.

Its function is as follows. GTPase that plays an essential role in the late steps of ribosome biogenesis. The chain is GTPase Der from Campylobacter curvus (strain 525.92).